Here is a 231-residue protein sequence, read N- to C-terminus: Ribose-5-phosphate isomerase A (231 aa).

Substrate-binding positions include 28-31, 83-86, and 96-99; these read TGST, DGAD, and KGGG. Catalysis depends on glutamate 105, which acts as the Proton acceptor. Residue lysine 123 coordinates substrate.

Belongs to the ribose 5-phosphate isomerase family. In terms of assembly, homodimer.

The enzyme catalyses aldehydo-D-ribose 5-phosphate = D-ribulose 5-phosphate. Its pathway is carbohydrate degradation; pentose phosphate pathway; D-ribose 5-phosphate from D-ribulose 5-phosphate (non-oxidative stage): step 1/1. Its function is as follows. Catalyzes the reversible conversion of ribose-5-phosphate to ribulose 5-phosphate. The polypeptide is Ribose-5-phosphate isomerase A (Sinorhizobium medicae (strain WSM419) (Ensifer medicae)).